Reading from the N-terminus, the 477-residue chain is Ectonucleotide pyrophosphatase/phosphodiesterase family member 5 (477 aa).

An N-terminal signal peptide occupies residues M1 to Q24. Positions 36 and 72 each coordinate Zn(2+). The active-site Nucleophile is the T72. Residues N101 and N158 are each glycosylated (N-linked (GlcNAc...) asparagine). Positions 191, 195, 238, and 239 each coordinate Zn(2+). N292 and N329 each carry an N-linked (GlcNAc...) asparagine glycan. H339 provides a ligand contact to Zn(2+). N-linked (GlcNAc...) asparagine glycosylation is found at N362, N369, N382, and N389. The chain crosses the membrane as a helical span at residues P432 to I452.

This sequence belongs to the nucleotide pyrophosphatase/phosphodiesterase family. The cofactor is Zn(2+). In terms of processing, N-glycosylated.

Its subcellular location is the secreted. It is found in the membrane. Its function is as follows. Can hydrolyze NAD but cannot hydrolyze nucleotide di- and triphosphates. Lacks lysopholipase D activity. May play a role in neuronal cell communication. This is Ectonucleotide pyrophosphatase/phosphodiesterase family member 5 from Homo sapiens (Human).